The following is a 660-amino-acid chain: DNA mismatch repair protein MutL (660 aa).

It belongs to the DNA mismatch repair MutL/HexB family.

In terms of biological role, this protein is involved in the repair of mismatches in DNA. It is required for dam-dependent methyl-directed DNA mismatch repair. May act as a 'molecular matchmaker', a protein that promotes the formation of a stable complex between two or more DNA-binding proteins in an ATP-dependent manner without itself being part of a final effector complex. This Solibacter usitatus (strain Ellin6076) protein is DNA mismatch repair protein MutL.